A 251-amino-acid chain; its full sequence is Zinc import ATP-binding protein ZnuC (251 aa).

An ABC transporter domain is found at 5–220 (VSLENVSVSF…PEFISMFGPR (216 aa)). 37–44 (GPNGAGKS) lines the ATP pocket.

This sequence belongs to the ABC transporter superfamily. Zinc importer (TC 3.A.1.15.5) family. As to quaternary structure, the complex is composed of two ATP-binding proteins (ZnuC), two transmembrane proteins (ZnuB) and a solute-binding protein (ZnuA).

It is found in the cell inner membrane. The catalysed reaction is Zn(2+)(out) + ATP(in) + H2O(in) = Zn(2+)(in) + ADP(in) + phosphate(in) + H(+)(in). Its function is as follows. Part of the ABC transporter complex ZnuABC involved in zinc import. Responsible for energy coupling to the transport system. Seems to be important for the virulence. This chain is Zinc import ATP-binding protein ZnuC, found in Salmonella typhimurium (strain LT2 / SGSC1412 / ATCC 700720).